Reading from the N-terminus, the 364-residue chain is BOLA class I histocompatibility antigen, alpha chain BL3-7 (364 aa).

An N-terminal signal peptide occupies residues 1-27 (MRVMRVMRPRTLLLLLSGVLVLTETLA). The interval 28–117 (GSHSLRYFYT…LRGYYNQSET (90 aa)) is alpha-1. The Extracellular segment spans residues 28 to 310 (GSHSLRYFYT…WEPPQTSFLI (283 aa)). Asn-113 carries N-linked (GlcNAc...) asparagine glycosylation. Residues 118 to 209 (GSHNIQAMYG…ENGKDTLLRA (92 aa)) form an alpha-2 region. 2 disulfide bridges follow: Cys-128/Cys-191 and Cys-230/Cys-286. The alpha-3 stretch occupies residues 210 to 301 (DPPKAHVTHH…GLQEPLTLRW (92 aa)). One can recognise an Ig-like C1-type domain in the interval 212–298 (PKAHVTHHSI…QHEGLQEPLT (87 aa)). The segment at 302 to 310 (EPPQTSFLI) is connecting peptide. Residues 311–331 (MGIIVGLVLLVVALVAGAVIW) traverse the membrane as a helical segment. Residues 332-364 (RKKRSGEKGRIYTQAASSDSAQGSDVSLTVPKV) are Cytoplasmic-facing. 2 positions are modified to phosphoserine: Ser-355 and Ser-358.

Belongs to the MHC class I family. Heterodimer of an alpha chain and a beta chain (beta-2-microglobulin).

It localises to the membrane. Its function is as follows. Involved in the presentation of foreign antigens to the immune system. This Bos taurus (Bovine) protein is BOLA class I histocompatibility antigen, alpha chain BL3-7.